The following is a 267-amino-acid chain: Cilia- and flagella-associated protein 300 (267 aa).

It belongs to the CFAP300 family. Interacts with DNAAF2.

It is found in the cytoplasm. The protein resides in the cytoskeleton. The protein localises to the cilium axoneme. Cilium- and flagellum-specific protein that plays a role in axonemal structure organization and motility. May play a role in outer and inner dynein arm assembly. This chain is Cilia- and flagella-associated protein 300, found in Rattus norvegicus (Rat).